We begin with the raw amino-acid sequence, 228 residues long: Glutamate transport system permease protein GluC (228 aa).

A run of 4 helical transmembrane segments spans residues 16-36, 64-84, 100-120, and 195-215; these read FWVT…LGTI, LTLV…LTLA, AVLG…RSGI, and LFVV…PMGL. An ABC transmembrane type-1 domain is found at 16–217; that stretch reads FWVTIQLTVY…ILTLPMGLGL (202 aa).

It belongs to the binding-protein-dependent transport system permease family. HisMQ subfamily. In terms of assembly, the complex is composed of two ATP-binding proteins (GluA), two transmembrane proteins (GluC and GluD) and a solute-binding protein (GluB).

The protein resides in the cell membrane. Its function is as follows. Part of the ABC transporter complex GluABCD involved in glutamate uptake. Probably responsible for the translocation of the substrate across the membrane. This Corynebacterium efficiens (strain DSM 44549 / YS-314 / AJ 12310 / JCM 11189 / NBRC 100395) protein is Glutamate transport system permease protein GluC.